Here is a 373-residue protein sequence, read N- to C-terminus: Dual-specificity RNA methyltransferase RlmN (373 aa).

Residue Glu-94 is the Proton acceptor of the active site. Residues 100–339 enclose the Radical SAM core domain; it reads EDDRATLCVS…VIVRKTRGDD (240 aa). Residues Cys-107 and Cys-344 are joined by a disulfide bond. Positions 114, 118, and 121 each coordinate [4Fe-4S] cluster. S-adenosyl-L-methionine is bound by residues 168–169, Ser-200, 222–224, and Asn-301; these read GE and SIH. Catalysis depends on Cys-344, which acts as the S-methylcysteine intermediate.

This sequence belongs to the radical SAM superfamily. RlmN family. Requires [4Fe-4S] cluster as cofactor.

Its subcellular location is the cytoplasm. The enzyme catalyses adenosine(2503) in 23S rRNA + 2 reduced [2Fe-2S]-[ferredoxin] + 2 S-adenosyl-L-methionine = 2-methyladenosine(2503) in 23S rRNA + 5'-deoxyadenosine + L-methionine + 2 oxidized [2Fe-2S]-[ferredoxin] + S-adenosyl-L-homocysteine. It carries out the reaction adenosine(37) in tRNA + 2 reduced [2Fe-2S]-[ferredoxin] + 2 S-adenosyl-L-methionine = 2-methyladenosine(37) in tRNA + 5'-deoxyadenosine + L-methionine + 2 oxidized [2Fe-2S]-[ferredoxin] + S-adenosyl-L-homocysteine. Functionally, specifically methylates position 2 of adenine 2503 in 23S rRNA and position 2 of adenine 37 in tRNAs. m2A2503 modification seems to play a crucial role in the proofreading step occurring at the peptidyl transferase center and thus would serve to optimize ribosomal fidelity. In Shewanella baltica (strain OS155 / ATCC BAA-1091), this protein is Dual-specificity RNA methyltransferase RlmN.